The chain runs to 393 residues: S-adenosylmethionine synthase 3 (393 aa).

Residue Glu-9 participates in Mg(2+) binding. Residue His-15 participates in ATP binding. Glu-43 provides a ligand contact to K(+). 2 residues coordinate L-methionine: Glu-56 and Gln-99. ATP contacts are provided by residues 167 to 169, 235 to 238, Asp-246, 252 to 253, Ala-269, Lys-273, and Lys-277; these read DGK, SGRF, and RK. Asp-246 contributes to the L-methionine binding site. Position 277 (Lys-277) interacts with L-methionine.

It belongs to the AdoMet synthase family. As to quaternary structure, homotetramer. It depends on Mn(2+) as a cofactor. The cofactor is Mg(2+). Requires Co(2+) as cofactor. K(+) is required as a cofactor.

It localises to the cytoplasm. The catalysed reaction is L-methionine + ATP + H2O = S-adenosyl-L-methionine + phosphate + diphosphate. It participates in amino-acid biosynthesis; S-adenosyl-L-methionine biosynthesis; S-adenosyl-L-methionine from L-methionine: step 1/1. Functionally, catalyzes the formation of S-adenosylmethionine from methionine and ATP. The reaction comprises two steps that are both catalyzed by the same enzyme: formation of S-adenosylmethionine (AdoMet) and triphosphate, and subsequent hydrolysis of the triphosphate. The chain is S-adenosylmethionine synthase 3 (SAM3) from Petunia hybrida (Petunia).